Consider the following 323-residue polypeptide: Sphingolipid delta(4)-desaturase DES1 (323 aa).

G2 carries N-myristoyl glycine lipidation. 2 helical membrane-spanning segments follow: residues 41 to 61 and 68 to 88; these read PNLI…FYLV and WLMF…TLAI. Residues 89–93 carry the Histidine box-1 motif; it reads HEISH. The chain crosses the membrane as a helical span at residues 104-124; sequence WNRWFGMFANLSLGVPYSISF. The short motif at 128-132 is the Histidine box-2 element; it reads HMDHH. 3 helical membrane passes run 152 to 172, 184 to 204, and 210 to 230; these read FFCT…FYAF, HLEV…YYVF, and VYML…GHFI. Positions 259–263 match the Histidine box-3 motif; sequence HNEHH. The residue at position 307 (S307) is a Phosphoserine.

Belongs to the fatty acid desaturase type 1 family. DEGS subfamily. Interacts with RLBP1; the interaction increases synthesis of chromophore-precursors by DEGS1. In terms of processing, myristoylation can target the enzyme to the mitochondria leading to an increase in ceramide levels.

It localises to the mitochondrion membrane. It is found in the endoplasmic reticulum membrane. It carries out the reaction an N-acylsphinganine + 2 Fe(II)-[cytochrome b5] + O2 + 2 H(+) = an N-acylsphing-4-enine + 2 Fe(III)-[cytochrome b5] + 2 H2O. The catalysed reaction is all-trans-retinol = 11-cis-retinol. The enzyme catalyses all-trans-retinol = 9-cis-retinol. It catalyses the reaction all-trans-retinol = 13-cis-retinol. It carries out the reaction 11-cis-retinol = 13-cis-retinol. The catalysed reaction is 11-cis-retinol = 9-cis-retinol. Has sphingolipid-delta-4-desaturase activity. Converts D-erythro-sphinganine to D-erythro-sphingosine (E-sphing-4-enine). Catalyzes the equilibrium isomerization of retinols. The protein is Sphingolipid delta(4)-desaturase DES1 of Rattus norvegicus (Rat).